Here is a 166-residue protein sequence, read N- to C-terminus: RNA polymerase sigma factor SigV (166 aa).

A Polymerase core binding motif is present at residues 38 to 51 (DIVQESIKKALSSV). Residues 131–150 (LEEIAEITGENTNTVKTRLY) constitute a DNA-binding region (H-T-H motif).

The protein belongs to the sigma-70 factor family. ECF subfamily. In terms of assembly, interacts with RsiV.

Functionally, sigma factors are initiation factors that promote the attachment of RNA polymerase to specific initiation sites and are then released. Positively regulates the expression of proteins involved in stress responses against bacitracin, paraquat and tellurite. This is RNA polymerase sigma factor SigV (sigV) from Bacillus subtilis (strain 168).